Here is a 391-residue protein sequence, read N- to C-terminus: Elongation factor Tu 2 (391 aa).

The tr-type G domain maps to lysine 10–glutamate 201. The interval glycine 19–threonine 26 is G1. Glycine 19–threonine 26 contacts GTP. Residue threonine 26 participates in Mg(2+) binding. Residues glycine 55 to serine 59 form a G2 region. Positions aspartate 76–glycine 79 are G3. GTP is bound by residues aspartate 76–histidine 80 and asparagine 131–aspartate 134. Residues asparagine 131–aspartate 134 form a G4 region. Residues serine 169 to leucine 171 are G5.

Belongs to the TRAFAC class translation factor GTPase superfamily. Classic translation factor GTPase family. EF-Tu/EF-1A subfamily. Monomer.

The protein localises to the cytoplasm. It catalyses the reaction GTP + H2O = GDP + phosphate + H(+). Functionally, GTP hydrolase that promotes the GTP-dependent binding of aminoacyl-tRNA to the A-site of ribosomes during protein biosynthesis. The chain is Elongation factor Tu 2 from Bartonella bacilliformis (strain ATCC 35685 / KC583 / Herrer 020/F12,63).